Reading from the N-terminus, the 377-residue chain is Proteinase-activated receptor 3 (377 aa).

Residues 1–19 (MRAAIFAAIGALLLSPASC) form the signal peptide. The propeptide at 20 to 38 (QSGMEYDADNLAKPTLSIK) is removed for receptor activation. At 39-94 (TFRGAPQNSFEEFPLSAIEGWTGTTKTVKIKCPEELDSNLHVNNATMGYLSSPLST) the chain is on the extracellular side. The N-linked (GlcNAc...) asparagine glycan is linked to asparagine 82. A helical transmembrane segment spans residues 95 to 120 (KLIPAIYILVFAVGMPANAVTLWMLF). Topologically, residues 121–127 (RTRTIRM) are cytoplasmic. Residues 128 to 147 (TIFYTNLAIADFLFCVTLPF) traverse the membrane as a helical segment. At 148-166 (RIAYHLNGNNWVFGEVMCR) the chain is on the extracellular side. Cysteine 165 and cysteine 244 are joined by a disulfide. The chain crosses the membrane as a helical span at residues 167–188 (ATTVIFYGNMYCSILLLACISI). Residues 189 to 205 (NRYLAIVHPFTYRGLPK) are Cytoplasmic-facing. A helical transmembrane segment spans residues 206–229 (RTYALLTCGLVWTTVFLYMLPFFI). Residues 230 to 259 (LKQEYYLVQQDITTCHDVHNTCESSSPFQL) lie on the Extracellular side of the membrane. A helical membrane pass occupies residues 260–279 (YYFISLAFFGFLIPFLVIIY). Over 280-296 (CYTAIIWTLNAKDRRWL) the chain is Cytoplasmic. The helical transmembrane segment at 297–321 (WYIKASLLTFVIFTICFAPSNIILI) threads the bilayer. The Extracellular segment spans residues 322–335 (IHHANYYYSNTDAL). A helical membrane pass occupies residues 336 to 360 (YFVYLIALCLGSLNSCLDPFLYFLM). At 361–377 (SKITDHSTAYLTMVKLS) the chain is on the cytoplasmic side.

It belongs to the G-protein coupled receptor 1 family. Interacts with INSC/inscuteable and GPSM2. Post-translationally, a proteolytic cleavage generates a new N-terminus that functions as a tethered ligand.

It is found in the cell membrane. In terms of biological role, receptor for activated thrombin coupled to G proteins that stimulate phosphoinositide hydrolysis. The sequence is that of Proteinase-activated receptor 3 (F2RL2) from Bos taurus (Bovine).